The primary structure comprises 61 residues: Small ribosomal subunit protein uS14 (61 aa).

Residues C24, C27, C40, and C43 each contribute to the Zn(2+) site.

This sequence belongs to the universal ribosomal protein uS14 family. Zinc-binding uS14 subfamily. As to quaternary structure, part of the 30S ribosomal subunit. Contacts proteins S3 and S10. It depends on Zn(2+) as a cofactor.

In terms of biological role, binds 16S rRNA, required for the assembly of 30S particles and may also be responsible for determining the conformation of the 16S rRNA at the A site. The polypeptide is Small ribosomal subunit protein uS14 (Staphylococcus carnosus (strain TM300)).